The following is a 206-amino-acid chain: Acireductone dioxygenase (206 aa).

Positions 102, 104, 108, and 146 each coordinate Fe(2+). 4 residues coordinate Ni(2+): histidine 102, histidine 104, glutamate 108, and histidine 146.

Belongs to the acireductone dioxygenase (ARD) family. As to quaternary structure, monomer. It depends on Fe(2+) as a cofactor. Ni(2+) serves as cofactor.

It carries out the reaction 1,2-dihydroxy-5-(methylsulfanyl)pent-1-en-3-one + O2 = 3-(methylsulfanyl)propanoate + CO + formate + 2 H(+). It catalyses the reaction 1,2-dihydroxy-5-(methylsulfanyl)pent-1-en-3-one + O2 = 4-methylsulfanyl-2-oxobutanoate + formate + 2 H(+). The protein operates within amino-acid biosynthesis; L-methionine biosynthesis via salvage pathway; L-methionine from S-methyl-5-thio-alpha-D-ribose 1-phosphate: step 5/6. Its function is as follows. Catalyzes 2 different reactions between oxygen and the acireductone 1,2-dihydroxy-3-keto-5-methylthiopentene (DHK-MTPene) depending upon the metal bound in the active site. Fe-containing acireductone dioxygenase (Fe-ARD) produces formate and 2-keto-4-methylthiobutyrate (KMTB), the alpha-ketoacid precursor of methionine in the methionine recycle pathway. Ni-containing acireductone dioxygenase (Ni-ARD) produces methylthiopropionate, carbon monoxide and formate, and does not lie on the methionine recycle pathway. The protein is Acireductone dioxygenase of Frankia alni (strain DSM 45986 / CECT 9034 / ACN14a).